We begin with the raw amino-acid sequence, 298 residues long: Serine/threonine-protein kinase 1 (298 aa).

The 239-residue stretch at 38-276 (FIATRPMFEG…FKSLVSHPWF (239 aa)) folds into the Protein kinase domain. Residues 45–53 (FEGGRNNVF) and lysine 65 contribute to the ATP site. The active-site Proton acceptor is the aspartate 152.

This sequence belongs to the protein kinase superfamily. Ser/Thr protein kinase family.

It localises to the virion. The protein resides in the host cytoplasm. It carries out the reaction L-seryl-[protein] + ATP = O-phospho-L-seryl-[protein] + ADP + H(+). The catalysed reaction is L-threonyl-[protein] + ATP = O-phospho-L-threonyl-[protein] + ADP + H(+). Essential for viral replication. It may mediate the virus' progression through DNA replication. The protein is Serine/threonine-protein kinase 1 of Ornithodoros (relapsing fever ticks).